A 316-amino-acid polypeptide reads, in one-letter code: 4-hydroxy-3-methylbut-2-enyl diphosphate reductase (316 aa).

Residue cysteine 12 participates in [4Fe-4S] cluster binding. Histidine 41 and histidine 74 together coordinate (2E)-4-hydroxy-3-methylbut-2-enyl diphosphate. Residues histidine 41 and histidine 74 each coordinate dimethylallyl diphosphate. Isopentenyl diphosphate-binding residues include histidine 41 and histidine 74. Cysteine 96 provides a ligand contact to [4Fe-4S] cluster. Histidine 124 contacts (2E)-4-hydroxy-3-methylbut-2-enyl diphosphate. Residue histidine 124 participates in dimethylallyl diphosphate binding. Histidine 124 lines the isopentenyl diphosphate pocket. The active-site Proton donor is the glutamate 126. Residue threonine 167 coordinates (2E)-4-hydroxy-3-methylbut-2-enyl diphosphate. Residue cysteine 197 coordinates [4Fe-4S] cluster. Residues serine 225, serine 226, asparagine 227, and serine 269 each contribute to the (2E)-4-hydroxy-3-methylbut-2-enyl diphosphate site. Serine 225, serine 226, asparagine 227, and serine 269 together coordinate dimethylallyl diphosphate. Positions 225, 226, 227, and 269 each coordinate isopentenyl diphosphate.

It belongs to the IspH family. Homodimer. Requires [4Fe-4S] cluster as cofactor.

The enzyme catalyses isopentenyl diphosphate + 2 oxidized [2Fe-2S]-[ferredoxin] + H2O = (2E)-4-hydroxy-3-methylbut-2-enyl diphosphate + 2 reduced [2Fe-2S]-[ferredoxin] + 2 H(+). It catalyses the reaction dimethylallyl diphosphate + 2 oxidized [2Fe-2S]-[ferredoxin] + H2O = (2E)-4-hydroxy-3-methylbut-2-enyl diphosphate + 2 reduced [2Fe-2S]-[ferredoxin] + 2 H(+). The protein operates within isoprenoid biosynthesis; dimethylallyl diphosphate biosynthesis; dimethylallyl diphosphate from (2E)-4-hydroxy-3-methylbutenyl diphosphate: step 1/1. It participates in isoprenoid biosynthesis; isopentenyl diphosphate biosynthesis via DXP pathway; isopentenyl diphosphate from 1-deoxy-D-xylulose 5-phosphate: step 6/6. Its function is as follows. Catalyzes the conversion of 1-hydroxy-2-methyl-2-(E)-butenyl 4-diphosphate (HMBPP) into a mixture of isopentenyl diphosphate (IPP) and dimethylallyl diphosphate (DMAPP). Acts in the terminal step of the DOXP/MEP pathway for isoprenoid precursor biosynthesis. This Enterobacter sp. (strain 638) protein is 4-hydroxy-3-methylbut-2-enyl diphosphate reductase.